The chain runs to 119 residues: Small ribosomal subunit protein uS10 (119 aa).

The protein belongs to the universal ribosomal protein uS10 family. As to quaternary structure, component of the 40S small ribosomal subunit.

The protein resides in the cytoplasm. Functionally, component of the small ribosomal subunit. The ribosome is a large ribonucleoprotein complex responsible for the synthesis of proteins in the cell. The chain is Small ribosomal subunit protein uS10 (rps20) from Xenopus laevis (African clawed frog).